The sequence spans 75 residues: U6-lycotoxin-Ls1g (75 aa).

The signal sequence occupies residues 1 to 21; that stretch reads MKLLLFTALVLVVISLIEVEA. Residues 22–25 constitute a propeptide that is removed on maturation; it reads ENER.

This sequence belongs to the neurotoxin 19 (CSTX) family. 06 (U6-Lctx) subfamily. Contains 4 disulfide bonds. As to expression, expressed by the venom gland.

The protein resides in the secreted. This is U6-lycotoxin-Ls1g from Lycosa singoriensis (Wolf spider).